The primary structure comprises 185 residues: Ribonuclease HII (185 aa).

Residues 1 to 185 form the RNase H type-2 domain; sequence MIILGIDEAG…KSYKPIQLLL (185 aa). A divalent metal cation contacts are provided by Asp7, Glu8, and Asp99.

The protein belongs to the RNase HII family. Mn(2+) is required as a cofactor. The cofactor is Mg(2+).

The protein resides in the cytoplasm. The enzyme catalyses Endonucleolytic cleavage to 5'-phosphomonoester.. Endonuclease that specifically degrades the RNA of RNA-DNA hybrids. This is Ribonuclease HII from Francisella philomiragia subsp. philomiragia (strain ATCC 25017 / CCUG 19701 / FSC 153 / O#319-036).